The chain runs to 188 residues: uncharacterized protein (188 aa).

It localises to the plastid. The protein localises to the cyanelle. This is an uncharacterized protein from Cyanophora paradoxa.